The following is a 699-amino-acid chain: Elongation factor G (699 aa).

In terms of domain architecture, tr-type G spans 10–292 (NRTRNIGIMA…AVIDYLPSPT (283 aa)). GTP contacts are provided by residues 19–26 (AHIDAGKT), 90–94 (DTPGH), and 144–147 (NKMD). The tract at residues 292 to 312 (TDVPAIRGEEDDGSEGSRSAS) is disordered.

Belongs to the TRAFAC class translation factor GTPase superfamily. Classic translation factor GTPase family. EF-G/EF-2 subfamily.

The protein resides in the cytoplasm. Its function is as follows. Catalyzes the GTP-dependent ribosomal translocation step during translation elongation. During this step, the ribosome changes from the pre-translocational (PRE) to the post-translocational (POST) state as the newly formed A-site-bound peptidyl-tRNA and P-site-bound deacylated tRNA move to the P and E sites, respectively. Catalyzes the coordinated movement of the two tRNA molecules, the mRNA and conformational changes in the ribosome. The polypeptide is Elongation factor G (Coxiella burnetii (strain CbuG_Q212) (Coxiella burnetii (strain Q212))).